The primary structure comprises 324 residues: Dolichyl-phosphate beta-glucosyltransferase (324 aa).

Residues 1 to 7 (MATLLLQ) lie on the Lumenal side of the membrane. The chain crosses the membrane as a helical span at residues 8-28 (LLGLGVALAAAALILVSIVAF). Residues 29 to 324 (ITATKMPPCY…WRLKQTRKAS (296 aa)) are Cytoplasmic-facing.

Belongs to the glycosyltransferase 2 family.

It localises to the endoplasmic reticulum membrane. The enzyme catalyses a di-trans,poly-cis-dolichyl phosphate + UDP-alpha-D-glucose = a di-trans,poly-cis-dolichyl beta-D-glucosyl phosphate + UDP. It functions in the pathway protein modification; protein glycosylation. Functionally, dolichyl-phosphate beta-glucosyltransferase that operates in the biosynthetic pathway of dolichol-linked oligosaccharides, the glycan precursors employed in protein asparagine (N)-glycosylation. The assembly of dolichol-linked oligosaccharides begins on the cytosolic side of the endoplasmic reticulum membrane and finishes in its lumen. The sequential addition of sugars to dolichol pyrophosphate produces dolichol-linked oligosaccharides containing fourteen sugars, including two GlcNAcs, nine mannoses and three glucoses. Once assembled, the oligosaccharide is transferred from the lipid to nascent proteins by oligosaccharyltransferases. Dolichyl-phosphate beta-glucosyltransferase produces dolichyl beta-D-glucosyl phosphate/Dol-P-Glc, the glucose donor substrate used sequentially by ALG6, ALG8 and ALG10 to add glucose residues on top of the Man(9)GlcNAc(2)-PP-Dol structure. These are the three last steps in the biosynthetic pathway of dolichol-linked oligosaccharides to produce Glc(3)Man(9)GlcNAc(2)-PP-Dol. The enzyme is most probably active on the cytoplasmic side of the endoplasmic reticulum while its product Dol-P-Glc is the substrate for ALG6, ALG8 and ALG11 in the lumen of the endoplasmic reticulum. In Mus musculus (Mouse), this protein is Dolichyl-phosphate beta-glucosyltransferase.